We begin with the raw amino-acid sequence, 79 residues long: Polcalcin Bra r 1 (79 aa).

EF-hand domains are found at residues 1–36 and 39–71; these read MADA…LGSV and DDVT…NPGL. Asp-14, Asp-16, Asp-18, Lys-20, Glu-25, Asp-49, Asp-51, Asp-53, Asn-55, and Glu-60 together coordinate Ca(2+).

The polypeptide is Polcalcin Bra r 1 (Brassica campestris (Field mustard)).